The following is a 209-amino-acid chain: Na(+)-translocating NADH-quinone reductase subunit D (209 aa).

The next 5 membrane-spanning stretches (helical) occupy residues 42 to 62 (LVMTIAVTLVTAFSNFFISLI), 66 to 86 (IPGSVRIIVQMAIIASLVIVV), 103 to 123 (VFVGLIITNCIVMGRAEAYAM), 131 to 151 (FMDGIGNGLGYGVILILVGFL), and 178 to 198 (NGLFLLAPSAFFIIGLLIWGL).

Belongs to the NqrDE/RnfAE family. In terms of assembly, composed of six subunits; NqrA, NqrB, NqrC, NqrD, NqrE and NqrF.

The protein localises to the cell inner membrane. It carries out the reaction a ubiquinone + n Na(+)(in) + NADH + H(+) = a ubiquinol + n Na(+)(out) + NAD(+). Functionally, NQR complex catalyzes the reduction of ubiquinone-1 to ubiquinol by two successive reactions, coupled with the transport of Na(+) ions from the cytoplasm to the periplasm. NqrA to NqrE are probably involved in the second step, the conversion of ubisemiquinone to ubiquinol. The chain is Na(+)-translocating NADH-quinone reductase subunit D from Proteus mirabilis (strain HI4320).